The sequence spans 1254 residues: Receptor tyrosine-protein kinase erbB-2 (1254 aa).

Positions 1–22 (MELAAWCGWGLLLALLSPGASG) are cleaved as a signal peptide. Residues 23-652 (TQVCTGTDMK…PAEQRASPAT (630 aa)) are Extracellular-facing. An intrachain disulfide couples cysteine 26 to cysteine 53. N-linked (GlcNAc...) asparagine glycosylation is found at asparagine 68, asparagine 125, and asparagine 187. Intrachain disulfides connect cysteine 162–cysteine 192, cysteine 195–cysteine 204, cysteine 199–cysteine 212, cysteine 236–cysteine 244, cysteine 240–cysteine 252, cysteine 255–cysteine 264, cysteine 268–cysteine 295, cysteine 299–cysteine 311, cysteine 315–cysteine 331, cysteine 334–cysteine 338, cysteine 342–cysteine 367, cysteine 475–cysteine 504, cysteine 511–cysteine 520, and cysteine 515–cysteine 528. Asparagine 259 carries N-linked (GlcNAc...) asparagine glycosylation. Asparagine 530 is a glycosylation site (N-linked (GlcNAc...) asparagine). 8 disulfides stabilise this stretch: cysteine 531/cysteine 540, cysteine 544/cysteine 560, cysteine 563/cysteine 576, cysteine 567/cysteine 584, cysteine 587/cysteine 596, cysteine 600/cysteine 623, cysteine 626/cysteine 634, and cysteine 630/cysteine 642. An N-linked (GlcNAc...) asparagine glycan is attached at asparagine 571. The N-linked (GlcNAc...) asparagine glycan is linked to asparagine 629. A helical membrane pass occupies residues 653-675 (SIIATVVGILLFLVIGVVVGILI). The tract at residues 676 to 689 (KRRRQKIRKYTMRR) is required for interaction with KPNB1 and EEA1. The Nuclear localization signal signature appears at 676–689 (KRRRQKIRKYTMRR). Over 676-1254 (KRRRQKIRKY…PEYLGLDVPV (579 aa)) the chain is Cytoplasmic. The Protein kinase domain occupies 720–987 (LRKVKVLGSG…RMARDPQRFV (268 aa)). ATP contacts are provided by residues 726 to 734 (LGSGAFGTV) and lysine 753. The active-site Proton acceptor is the aspartate 845. Tyrosine 877 is modified (phosphotyrosine). 2 disordered regions span residues 1029-1116 (GFFF…SEDP) and 1133-1179 (CSPQ…GKNG). Residues serine 1054, serine 1078, serine 1083, and serine 1107 each carry the phosphoserine modification. The residue at position 1112 (tyrosine 1112) is a Phosphotyrosine. Phosphotyrosine; by autocatalysis is present on tyrosine 1139. Pro residues predominate over residues 1146 to 1161 (RPQPPLTPEGPLPPVR). Threonine 1166 is modified (phosphothreonine). The interaction with PIK3C2B stretch occupies residues 1195–1197 (EYL). Tyrosine 1196 carries the post-translational modification Phosphotyrosine. Positions 1223-1254 (DQDPSERGSPPNTFEGTPTAENPEYLGLDVPV) are disordered. Residues 1232 to 1242 (PPNTFEGTPTA) show a composition bias toward polar residues. Tyrosine 1247 carries the phosphotyrosine; by autocatalysis modification.

This sequence belongs to the protein kinase superfamily. Tyr protein kinase family. EGF receptor subfamily. Homodimer. Heterodimer with EGFR, ERBB3 and ERBB4. Part of a complex with EGFR and either PIK3C2A or PIK3C2B. May interact with PIK3C2B when phosphorylated on Tyr-1196. Interacts with PRKCABP and PLXNB1. Interacts (when phosphorylated on Tyr-1247) with MEMO. Interacts with MUC1. Interacts (when phosphorylated on Tyr-1139) with GRB7 (via SH2 domain). Interacts (when phosphorylated on Tyr-1247) with ERBIN. Interacts with SRC, KPNB1, RANBP2, EEA1, CRM1, CLTC, PTK6, RPA194, MYOC and ACTB. Interacts (preferentially with the tyrosine phosphorylated form) with CPNE3; this interaction occurs at the cell membrane and is increased in a growth factor heregulin-dependent manner. Interacts with HSP90AA1 and HSP90AB1 in an ATP-dependent manner; the interaction suppresses ERBB2 kinase activity. Interacts with SORL1; this interaction regulates ERBB2 subcellular distribution by promoting its recycling after internalization from endosomes back to the plasma membrane, hence stimulates ERBB2-mediated signaling. Interacts with SH3BGRL. Interacts with ROR1. Autophosphorylated. Autophosphorylation occurs in trans, i.e. one subunit of the dimeric receptor phosphorylates tyrosine residues on the other subunit. Ligand-binding increases phosphorylation on tyrosine residues. Signaling via SEMA4C promotes phosphorylation at Tyr-1247. Dephosphorylated by PTPN12.

It localises to the cell membrane. The protein localises to the cell projection. Its subcellular location is the ruffle membrane. The protein resides in the early endosome. It is found in the cytoplasm. It localises to the perinuclear region. The protein localises to the nucleus. It catalyses the reaction L-tyrosyl-[protein] + ATP = O-phospho-L-tyrosyl-[protein] + ADP + H(+). Functionally, protein tyrosine kinase that is part of several cell surface receptor complexes, but that apparently needs a coreceptor for ligand binding. Essential component of a neuregulin-receptor complex, although neuregulins do not interact with it alone. GP30 is a potential ligand for this receptor. Regulates outgrowth and stabilization of peripheral microtubules (MTs). Upon ERBB2 activation, the MEMO1-RHOA-DIAPH1 signaling pathway elicits the phosphorylation and thus the inhibition of GSK3B at cell membrane. This prevents the phosphorylation of APC and CLASP2, allowing its association with the cell membrane. In turn, membrane-bound APC allows the localization of MACF1 to the cell membrane, which is required for microtubule capture and stabilization. Its function is as follows. In the nucleus is involved in transcriptional regulation. Associates with the 5'-TCAAATTC-3' sequence in the PTGS2/COX-2 promoter and activates its transcription. Implicated in transcriptional activation of CDKN1A; the function involves STAT3 and SRC. Involved in the transcription of rRNA genes by RNA Pol I and enhances protein synthesis and cell growth. The chain is Receptor tyrosine-protein kinase erbB-2 (ERBB2) from Mesocricetus auratus (Golden hamster).